The primary structure comprises 178 residues: Chorion class high-cysteine HCB protein 13 (178 aa).

The N-terminal stretch at 1 to 21 is a signal peptide; the sequence is MAAKLILFVCAIALVAQSVLG. The segment at 22 to 46 is left arm; the sequence is TGCGCCCRGCGCGCGGCGSRCCDRF. Residues 47–110 are central domain; it reads CLCSNSAAPT…GDGCVGITQS (64 aa). The tract at residues 111–178 is right arm (Gly-rich tandem repeats); sequence CGGCGCGCGG…GCGCGGCGCC (68 aa).

It belongs to the chorion protein family.

Functionally, this protein is one of many from the eggshell of the silk moth. The protein is Chorion class high-cysteine HCB protein 13 of Bombyx mori (Silk moth).